The primary structure comprises 1282 residues: Cytokine receptor (1282 aa).

An N-terminal signal peptide occupies residues 1 to 23 (MVAQEQLVLLLMLLAGCRGGANA). The Extracellular portion of the chain corresponds to 24 to 889 (ILDPGWVIPS…CTPDTHSVKA (866 aa)). N-linked (GlcNAc...) asparagine glycosylation is found at Asn-44, Asn-86, Asn-87, and Asn-114. Cysteines 47 and 106 form a disulfide. Fibronectin type-III domains are found at residues 124-220 (PLLV…NHFE), 227-327 (PGQN…TAPA), 329-431 (PRRP…SNRD), 436-535 (EPRN…KKDD), 537-631 (AKME…TGEA), 635-735 (QPRE…TAIG), and 736-836 (VPSP…LMST). Cys-132 and Cys-142 are disulfide-bonded. Asn-143 and Asn-156 each carry an N-linked (GlcNAc...) asparagine glycan. Cys-173 and Cys-183 are joined by a disulfide. Asn-184, Asn-230, Asn-235, Asn-278, Asn-298, Asn-310, Asn-376, Asn-448, and Asn-466 each carry an N-linked (GlcNAc...) asparagine glycan. Residues Cys-472 and Cys-482 are joined by a disulfide bond. 8 N-linked (GlcNAc...) asparagine glycosylation sites follow: Asn-568, Asn-581, Asn-626, Asn-676, Asn-703, Asn-777, Asn-790, and Asn-862. Residues 890 to 910 (MYQTIEVTVAILVLGVIFYLV) traverse the membrane as a helical segment. Topologically, residues 911-1282 (YKKYRKMSDI…NAMAHNRHVL (372 aa)) are cytoplasmic. The residue at position 976 (Ser-976) is a Phosphoserine. 2 disordered regions span residues 989–1092 (TASS…HTFS) and 1238–1258 (TVGS…QHSR). Basic and acidic residues-rich tracts occupy residues 999 to 1009 (VDRDGYDDNHE) and 1033 to 1064 (NDRE…DREQ).

The protein belongs to the type I cytokine receptor family. In terms of assembly, interacts with wdp; the interaction promotes internalization of dome and its subsequent lysosomal degradation; thereby reducing JAK/STAT signaling. In terms of processing, undergoes lysosomal degradation. In stage 11 embryos, tracheal pits show highest expression, at stage 14 high expression is detected in the posterior spiracles, gut and head.

Its subcellular location is the apicolateral cell membrane. Its function is as follows. Critical for epithelial morphogenesis during oogenesis; border cell migration. Required in the germarium for the polarization of follicle cells during encapsulation of germline cells. Required for embryonic segmentation and trachea specification. Essential receptor molecule for upd and JAK/STAT signaling during oogenesis. This is Cytokine receptor (dome) from Drosophila melanogaster (Fruit fly).